Reading from the N-terminus, the 131-residue chain is MTTKRKPYVRPMTSTWWKKLPFYRFYMLREGTAVPAVWFSIELIFGLFALKNGPEAWAGFVDFLQNPVIVIINLITLAAALLHTKTWFELAPKAANIIVKDEKMGPEPIIKSLWAVTVVATIVILFVALYW.

Transmembrane regions (helical) follow at residues 30 to 50 (EGTAVPAVWFSIELIFGLFAL), 63 to 83 (FLQNPVIVIINLITLAAALLH), and 109 to 129 (IIKSLWAVTVVATIVILFVAL).

This sequence belongs to the FrdC family. Part of an enzyme complex containing four subunits: a flavoprotein (FrdA), an iron-sulfur protein (FrdB), and two hydrophobic anchor proteins (FrdC and FrdD).

Its subcellular location is the cell inner membrane. Functionally, two distinct, membrane-bound, FAD-containing enzymes are responsible for the catalysis of fumarate and succinate interconversion; fumarate reductase is used in anaerobic growth, and succinate dehydrogenase is used in aerobic growth. Anchors the catalytic components of the fumarate reductase complex to the cell inner membrane, binds quinones. The chain is Fumarate reductase subunit C from Shigella boydii serotype 18 (strain CDC 3083-94 / BS512).